Here is a 697-residue protein sequence, read N- to C-terminus: Sodium-dependent phosphate transport protein 2B (697 aa).

The interval 1–45 (MAPWPELENAQPNPGKFIEGASGPQSSIPAKDKEASKTNDNGTPV) is disordered. Residues 1–91 (MAPWPELENA…WSERDTKGKT (91 aa)) are Cytoplasmic-facing. The chain crosses the membrane as a helical span at residues 92-112 (LCIFQGVGKFILLLGFLYLFV). The Extracellular portion of the chain corresponds to 113–136 (CSLDVLSSAFQLVGGKVAGQFFSN). A helical membrane pass occupies residues 137–157 (NSIMSNPVAGLVIGVLVTVMV). Residues 158-213 (QSSSTSSSIIVSMVASSLLTVRAAIPIIMGANIGTSITNTIVALMQAGDRNEFRRA) are Cytoplasmic-facing. The chain crosses the membrane as a helical span at residues 214-234 (FAGATVHDFFNWLSVFVLLPL). Topologically, residues 235 to 363 (EAATHYLEIL…FVNFSLPDLA (129 aa)) are extracellular. N-linked (GlcNAc...) asparagine glycans are attached at residues asparagine 295, asparagine 308, asparagine 321, and asparagine 356. Cysteine 303 and cysteine 350 are disulfide-bonded. Residues 364 to 384 (VGIILLTVSLVVLCGCLIMIV) traverse the membrane as a helical segment. Residues 385–408 (KLLGSVLRGQVATVIKKTLNTDFP) are Cytoplasmic-facing. A helical membrane pass occupies residues 409-429 (FPFAWLTGYLAILVGAGMTFI). Over 430–486 (VQSSSVFTSAMTPLIGIGVISIERAYPLTLGSNIGTTTTAILAALASPGNTLRSSLQ) the chain is Extracellular. A helical membrane pass occupies residues 487-507 (IALCHFFFNISGILLWYPIPF). The Cytoplasmic portion of the chain corresponds to 508-526 (TRLPIRLAKGLGNISAKYR). Residues 527 to 547 (WFAVFYLIFFFFVTPLTVFGL) traverse the membrane as a helical segment. Topologically, residues 548-551 (SLAG) are extracellular. The chain crosses the membrane as a helical span at residues 552 to 572 (WPVLVGVGVPIILLLLLVLCL). At 573-696 (RMLQFRCPRI…SMKALSNTTV (124 aa)) the chain is on the cytoplasmic side.

It belongs to the SLC34A transporter family. Highly abundant in the ileum of small intestine, whereas it is almost absent in the duodenum and in the jejunum.

Its subcellular location is the apical cell membrane. The enzyme catalyses 3 Na(+)(out) + phosphate(out) = 3 Na(+)(in) + phosphate(in). Involved in actively transporting phosphate into cells via Na(+) cotransport. The chain is Sodium-dependent phosphate transport protein 2B (Slc34a2) from Mus musculus (Mouse).